The chain runs to 352 residues: Ion-translocating oxidoreductase complex subunit D (352 aa).

A run of 4 helical transmembrane segments spans residues 20–40 (IMLL…WFFG), 42–62 (GTLF…AIVL), 69–91 (VASH…SIPP), and 123–143 (PAMI…TSWL). The residue at position 187 (threonine 187) is an FMN phosphoryl threonine. 5 helical membrane passes run 215 to 235 (LAGV…VFLL), 242 to 262 (WHIP…GWLF), 267 to 287 (LASP…FFIL), 301 to 321 (LIFG…GGYP), and 322 to 342 (DGVA…DYYT).

This sequence belongs to the NqrB/RnfD family. The complex is composed of six subunits: RsxA, RsxB, RsxC, RsxD, RsxE and RsxG. The cofactor is FMN.

The protein resides in the cell inner membrane. Part of a membrane-bound complex that couples electron transfer with translocation of ions across the membrane. Required to maintain the reduced state of SoxR. The sequence is that of Ion-translocating oxidoreductase complex subunit D from Salmonella dublin (strain CT_02021853).